The chain runs to 331 residues: Tyrosine recombinase XerD (331 aa).

In terms of domain architecture, Core-binding (CB) spans 8 to 93 (GRDGARLESF…SMRQFYRFLY (86 aa)). The region spanning 114-318 (ALPKTMSVAD…LEERLQELVQ (205 aa)) is the Tyr recombinase domain. Catalysis depends on residues Arg-161 and Lys-185. Over residues 214–228 (QEKSKAAASQKKTDT) the composition is skewed to basic and acidic residues. The interval 214–239 (QEKSKAAASQKKTDTAESPWLFPSNS) is disordered. Residues His-270, Arg-273, and His-296 contribute to the active site. Tyr-305 functions as the O-(3'-phospho-DNA)-tyrosine intermediate in the catalytic mechanism.

Belongs to the 'phage' integrase family. XerD subfamily. Forms a cyclic heterotetrameric complex composed of two molecules of XerC and two molecules of XerD.

The protein localises to the cytoplasm. Functionally, site-specific tyrosine recombinase, which acts by catalyzing the cutting and rejoining of the recombining DNA molecules. The XerC-XerD complex is essential to convert dimers of the bacterial chromosome into monomers to permit their segregation at cell division. It also contributes to the segregational stability of plasmids. This is Tyrosine recombinase XerD from Agrobacterium fabrum (strain C58 / ATCC 33970) (Agrobacterium tumefaciens (strain C58)).